A 136-amino-acid chain; its full sequence is Large ribosomal subunit protein uL16 (136 aa).

This sequence belongs to the universal ribosomal protein uL16 family. In terms of assembly, part of the 50S ribosomal subunit.

Functionally, binds 23S rRNA and is also seen to make contacts with the A and possibly P site tRNAs. The sequence is that of Large ribosomal subunit protein uL16 from Actinobacillus succinogenes (strain ATCC 55618 / DSM 22257 / CCUG 43843 / 130Z).